The following is a 45-amino-acid chain: Photosystem I reaction center subunit IX 1 (45 aa).

A helical transmembrane segment spans residues 9-29 (WFRSAPVVATIWITLTAGIIV).

This sequence belongs to the PsaJ family.

The protein localises to the cellular thylakoid membrane. In terms of biological role, may help in the organization of the PsaE and PsaF subunits. In Prochlorococcus marinus (strain NATL1A), this protein is Photosystem I reaction center subunit IX 1.